The chain runs to 97 residues: Small integral membrane protein 8 (97 aa).

Positions 1-24 (MSSAPEPPTFKKEPPKEKDFQSPG) are disordered. Positions 9 to 20 (TFKKEPPKEKDF) are enriched in basic and acidic residues. The helical transmembrane segment at 48–67 (PVMAFGLVTLSLCVAYIGYL) threads the bilayer.

Belongs to the SMIM8 family.

Its subcellular location is the membrane. This is Small integral membrane protein 8 (SMIM8) from Pongo abelii (Sumatran orangutan).